The following is a 462-amino-acid chain: Probable Xaa-Pro aminopeptidase pepP (462 aa).

D259, D270, E393, and E433 together coordinate Mn(2+).

It belongs to the peptidase M24B family. The cofactor is Mn(2+).

The enzyme catalyses Release of any N-terminal amino acid, including proline, that is linked to proline, even from a dipeptide or tripeptide.. In terms of biological role, catalyzes the removal of a penultimate prolyl residue from the N-termini of peptides. This is Probable Xaa-Pro aminopeptidase pepP (pepP) from Metarhizium robertsii (strain ARSEF 23 / ATCC MYA-3075) (Metarhizium anisopliae (strain ARSEF 23)).